The following is a 540-amino-acid chain: MAGGGPVASTTTNRASQYGYARGGLNWYIFIVALTAGSGGLLFGYDIGVTGGVTSMPEFLQKFFPSIYDRTQQPSDSKDPYCTYDDQKLQLFTSSFFLAGMFVSFFAGSVVRRWGRKPTMLIASVLFLAGAGLNAGAQDLAMLVIGRVLLGFGVGGGNNAVPLYLSECAPPKYRGGLNMMFQLAVTIGIIVAQLVNYGTQTMNNGWRLSLGLAGVPAIILLIGSLLLPETPNSLIERGHRRRGRAVLARLRRTEAVDTEFEDICAAAEESTRYTLRQSWAALFSRQYSPMLIVTSLIAMLQQLTGINAIMFYVPVLFSSFGTARHAALLNTVIIGAVNVAATFVSIFSVDKFGRRGLFLEGGIQMFIGQVVTAAVLGVELNKYGTNLPSSTAAGVLVVICVYVAAFAWSWGPLGWLVPSEIQTLETRGAGMSMAVIVNFLFSFVIGQAFLSMMCAMRWGVFLFFAGWVVIMTFFVYFCLPETKGVPVETVPTMFARHWLWGRVMGEKGRALVAADEARKAGTVAFKVESGSEDGKPASDQ.

The Cytoplasmic segment spans residues 1-29; it reads MAGGGPVASTTTNRASQYGYARGGLNWYI. A helical membrane pass occupies residues 30 to 50; that stretch reads FIVALTAGSGGLLFGYDIGVT. Topologically, residues 51–90 are extracellular; that stretch reads GGVTSMPEFLQKFFPSIYDRTQQPSDSKDPYCTYDDQKLQ. A helical membrane pass occupies residues 91–111; it reads LFTSSFFLAGMFVSFFAGSVV. Residues 112–124 are Cytoplasmic-facing; the sequence is RRWGRKPTMLIAS. A helical transmembrane segment spans residues 125 to 135; that stretch reads VLFLAGAGLNA. Residues 136 to 147 lie on the Extracellular side of the membrane; that stretch reads GAQDLAMLVIGR. The helical transmembrane segment at 148–168 threads the bilayer; the sequence is VLLGFGVGGGNNAVPLYLSEC. The Cytoplasmic portion of the chain corresponds to 169 to 176; the sequence is APPKYRGG. The chain crosses the membrane as a helical span at residues 177–197; that stretch reads LNMMFQLAVTIGIIVAQLVNY. Topologically, residues 198–207 are extracellular; the sequence is GTQTMNNGWR. Residues 208–228 form a helical membrane-spanning segment; sequence LSLGLAGVPAIILLIGSLLLP. Over 229 to 296 the chain is Cytoplasmic; the sequence is ETPNSLIERG…YSPMLIVTSL (68 aa). Residues 297–317 form a helical membrane-spanning segment; that stretch reads IAMLQQLTGINAIMFYVPVLF. The Extracellular portion of the chain corresponds to 318-326; the sequence is SSFGTARHA. Residues 327–337 form a helical membrane-spanning segment; that stretch reads ALLNTVIIGAV. Residues 338–355 lie on the Cytoplasmic side of the membrane; the sequence is NVAATFVSIFSVDKFGRR. A helical membrane pass occupies residues 356–376; it reads GLFLEGGIQMFIGQVVTAAVL. The Extracellular portion of the chain corresponds to 377–396; that stretch reads GVELNKYGTNLPSSTAAGVL. The chain crosses the membrane as a helical span at residues 397–417; the sequence is VVICVYVAAFAWSWGPLGWLV. Residues 418-435 are Cytoplasmic-facing; it reads PSEIQTLETRGAGMSMAV. Residues 436 to 456 form a helical membrane-spanning segment; the sequence is IVNFLFSFVIGQAFLSMMCAM. At 457-458 the chain is on the extracellular side; the sequence is RW. Residues 459–479 traverse the membrane as a helical segment; it reads GVFLFFAGWVVIMTFFVYFCL. The Cytoplasmic portion of the chain corresponds to 480–540; the sequence is PETKGVPVET…SEDGKPASDQ (61 aa).

It belongs to the major facilitator superfamily. Sugar transporter (TC 2.A.1.1) family.

The protein localises to the membrane. In terms of biological role, active uptake of galactose. The sequence is that of H(+)/hexose cotransporter 2 (HUP2) from Parachlorella kessleri (Green alga).